Consider the following 347-residue polypeptide: Globoside alpha-1,3-N-acetylgalactosaminyltransferase 1 (347 aa).

The Cytoplasmic segment spans residues 1 to 5 (MRCRR). A helical; Signal-anchor for type II membrane protein membrane pass occupies residues 6-26 (LALGLGFSLLSGIALWSLWIY). Over 27–347 (METWLPFSYV…LDKATSWLRS (321 aa)) the chain is Lumenal. N-linked (GlcNAc...) asparagine glycosylation is present at Asn108. Substrate-binding positions include 116–121 (FAVGKY), 206–208 (DVD), and 228–231 (HPGY). Residues Asp206 and Asp208 each contribute to the Mn(2+) site. Residue Glu298 is the Nucleophile of the active site.

It belongs to the glycosyltransferase 6 family. Requires Mn(2+) as cofactor.

It is found in the golgi apparatus membrane. It carries out the reaction a globoside Gb4Cer (d18:1(4E)) + UDP-N-acetyl-alpha-D-galactosamine = a globoside Forssman (d18:1(4E)) + UDP + H(+). The enzyme catalyses a globoside Gb4Cer + UDP-N-acetyl-alpha-D-galactosamine = a globoside IV3GalNAc-Gb4Cer + UDP + H(+). It functions in the pathway protein modification; protein glycosylation. Functionally, catalyzes the formation of Forssman glycolipid via the addition of N-acetylgalactosamine (GalNAc) in alpha-1,3-linkage to GalNAcb-1,3Gala-1,4Galb-1,4GlcCer (Gb4Cer). Forssman glycolipid (also called Forssman antigen; FG) probably serves for adherence of some pathogens such as E.coli uropathogenic strains. This Canis lupus familiaris (Dog) protein is Globoside alpha-1,3-N-acetylgalactosaminyltransferase 1.